A 207-amino-acid chain; its full sequence is Large ribosomal subunit protein uL4 (207 aa).

The disordered stretch occupies residues 43–80 (RRRSGTAKSKGRSEVSGSTRKLYRQKGTGNARSGSVKS). Residues 69–78 (GTGNARSGSV) show a composition bias toward polar residues.

The protein belongs to the universal ribosomal protein uL4 family. As to quaternary structure, part of the 50S ribosomal subunit.

In terms of biological role, one of the primary rRNA binding proteins, this protein initially binds near the 5'-end of the 23S rRNA. It is important during the early stages of 50S assembly. It makes multiple contacts with different domains of the 23S rRNA in the assembled 50S subunit and ribosome. Forms part of the polypeptide exit tunnel. The chain is Large ribosomal subunit protein uL4 from Desulforapulum autotrophicum (strain ATCC 43914 / DSM 3382 / VKM B-1955 / HRM2) (Desulfobacterium autotrophicum).